The sequence spans 256 residues: Small ribosomal subunit protein eS1 (256 aa).

The residue at position 2 (A2) is an N-acetylalanine; partial.

This sequence belongs to the eukaryotic ribosomal protein eS1 family. As to quaternary structure, component of the small ribosomal subunit. Mature ribosomes consist of a small (40S) and a large (60S) subunit. The 40S subunit contains about 33 different proteins and 1 molecule of RNA (18S). The 60S subunit contains about 49 different proteins and 3 molecules of RNA (25S, 5.8S and 5S).

The protein resides in the cytoplasm. In Lachancea thermotolerans (strain ATCC 56472 / CBS 6340 / NRRL Y-8284) (Yeast), this protein is Small ribosomal subunit protein eS1.